We begin with the raw amino-acid sequence, 130 residues long: Secreted RxLR effector protein 68 (130 aa).

An N-terminal signal peptide occupies residues 1–29 (MRCVCASIRRTRIIEFLMFFALSSSTASC). Residue Asn36 is glycosylated (N-linked (GlcNAc...) asparagine). Positions 45 to 48 (RWLR) match the RxLR motif.

The protein belongs to the RxLR effector family.

It localises to the secreted. The protein resides in the host cytoplasm. Its subcellular location is the host nucleus. Functionally, effector that acts as a broad suppressor of cell death to interrupt plant immunity. Inhibits cell death induced by cell death-inducing proteins, including the PAMP elicitor INF1 from P.infestans. The polypeptide is Secreted RxLR effector protein 68 (Plasmopara viticola (Downy mildew of grapevine)).